We begin with the raw amino-acid sequence, 228 residues long: Cytidylate kinase (228 aa).

Residue 17 to 25 (GPTASGKGT) participates in ATP binding.

The protein belongs to the cytidylate kinase family. Type 1 subfamily.

Its subcellular location is the cytoplasm. The enzyme catalyses CMP + ATP = CDP + ADP. It catalyses the reaction dCMP + ATP = dCDP + ADP. The sequence is that of Cytidylate kinase from Burkholderia vietnamiensis (strain G4 / LMG 22486) (Burkholderia cepacia (strain R1808)).